An 884-amino-acid chain; its full sequence is Pyruvate, phosphate dikinase (884 aa).

The segment at 1–351 (MSTRRVYFFG…LWMLQARAGK (351 aa)) is N-terminal. ATP is bound at residue Arg99. Residues 352 to 408 (RTGFAMVRIAIDMCKEGMLTEEEALLRIDANKINEFLFKRFDPSVKPVVLGKGIPAS) form a linker 1 region. The segment at 409-507 (PGAAVGVICF…KFKEGDFISI (99 aa)) is central. Thr462 carries the post-translational modification Phosphothreonine; by PDRP1. His464 (tele-phosphohistidine intermediate) is an active-site residue. The tract at residues 508–542 (NGTTGEIYNGAVQTIEPGITDDLQTIMDWSDKYRV) is linker 2. A C-terminal region spans residues 543–884 (LKIRTNADTP…IAAIKARTNQ (342 aa)). Substrate is bound by residues Arg570, Arg626, Glu753, Gly774, Thr775, Asn776, and Asp777. A Mg(2+)-binding site is contributed by Glu753. Position 777 (Asp777) interacts with Mg(2+). Residue Cys839 is the Proton donor of the active site.

It belongs to the PEP-utilizing enzyme family. As to quaternary structure, homodimer. It depends on Mg(2+) as a cofactor. Phosphorylation of Thr-462 in the dark inactivates the enzyme. Dephosphorylation upon light stimulation reactivates the enzyme.

The enzyme catalyses pyruvate + phosphate + ATP = phosphoenolpyruvate + AMP + diphosphate + H(+). Its activity is regulated as follows. Activated by light-induced dephosphorylation. Inhibited by dark-induced phosphorylation. Both reactions are catalyzed by PDRP1. Its function is as follows. Catalyzes the reversible phosphorylation of pyruvate and phosphate. In Giardia intestinalis (Giardia lamblia), this protein is Pyruvate, phosphate dikinase.